The primary structure comprises 228 residues: Ribulose-phosphate 3-epimerase (228 aa).

S9 serves as a coordination point for substrate. Positions 34, 36, and 70 each coordinate a divalent metal cation. D36 acts as the Proton acceptor in catalysis. Residues H70, 146–149 (GKGG), 175–177 (DGG), and 197–198 (GT) contribute to the substrate site. A divalent metal cation is bound at residue D175. D175 (proton donor) is an active-site residue.

It belongs to the ribulose-phosphate 3-epimerase family. It depends on Co(2+) as a cofactor. Fe(2+) is required as a cofactor. Mn(2+) serves as cofactor. The cofactor is Zn(2+).

The catalysed reaction is D-ribulose 5-phosphate = D-xylulose 5-phosphate. It functions in the pathway carbohydrate degradation; pentose phosphate pathway; D-xylulose 5-phosphate from D-ribulose 5-phosphate (non-oxidative stage): step 1/1. Catalyzes the reversible epimerization of D-ribulose 5-phosphate to D-xylulose 5-phosphate. The chain is Ribulose-phosphate 3-epimerase from Schizosaccharomyces pombe (strain 972 / ATCC 24843) (Fission yeast).